Reading from the N-terminus, the 206-residue chain is Large ribosomal subunit protein uL4 (206 aa).

The interval glutamine 45 to serine 78 is disordered. Residues histidine 58–glycine 70 are compositionally biased toward basic residues.

The protein belongs to the universal ribosomal protein uL4 family. In terms of assembly, part of the 50S ribosomal subunit.

Its function is as follows. One of the primary rRNA binding proteins, this protein initially binds near the 5'-end of the 23S rRNA. It is important during the early stages of 50S assembly. It makes multiple contacts with different domains of the 23S rRNA in the assembled 50S subunit and ribosome. Functionally, forms part of the polypeptide exit tunnel. This chain is Large ribosomal subunit protein uL4, found in Burkholderia ambifaria (strain MC40-6).